Consider the following 182-residue polypeptide: Chromophore lyase CpcS/CpeS (182 aa).

It belongs to the CpcS/CpeS biliprotein lyase family.

Covalently attaches a chromophore to Cys residue(s) of phycobiliproteins. This chain is Chromophore lyase CpcS/CpeS, found in Thermosynechococcus vestitus (strain NIES-2133 / IAM M-273 / BP-1).